We begin with the raw amino-acid sequence, 350 residues long: Secreted effector protein PipB2 (350 aa).

Pentapeptide repeat domains lie at 162–201 (ANLTSENLCDADLSGANLEGAVLFMADCEGANFKGANLSG), 202–241 (TSLGDSNFKNACLEDSIMCGATLDHANLTGANLQHASLLG), 247–286 (CNCSGANMDHTNLSGATLIRADMSGATLQGATIMAAIMEG), and 287–326 (AVLTRANLRKASFISTNLDGADLAEANLNNTCFKDCTLTD).

As to quaternary structure, interacts with the host kinesin light chain (KLC), a subunit of the kinesin-1 motor complex.

Its subcellular location is the secreted. The protein resides in the host membrane. Functionally, effector proteins function to alter host cell physiology and promote bacterial survival in host tissues. Involved in the reorganization of late endosome/lysosome (LE/Lys) compartments in mammalian cells. Necessary and sufficient to link kinesin-1 onto the Salmonella-containing vacuole (SCV) membrane. Required for centrifugal extension of lysosomal glycoprotein-rich membrane tubules, known as Salmonella-induced filaments (Sifs), away from the SCV and toward the cell periphery. Required for virulence, but not for intracellular survival and replication in phagocytic cells. The chain is Secreted effector protein PipB2 (pipB2) from Salmonella typhimurium (strain LT2 / SGSC1412 / ATCC 700720).